Here is a 194-residue protein sequence, read N- to C-terminus: MTHPTDIKTLARWMAADFSNQEQAFANPPFFAHIRVCMRPLPDELLNGTSLFLEQAYDFMLNTPYRLRVFKLSLVDDHIELENFKVKEEANFFGASREPQRLKNLTLDLLEPMLGCDMNVTWTGNSFKGVVKPGKQCLVFRKDRMTYLDNSFEISERGLISVDRGLDPETDQLVWGSIAGPFEFVRRTSFAEEV.

It belongs to the CpcT/CpeT biliprotein lyase family.

In terms of biological role, covalently attaches a chromophore to Cys residue(s) of phycobiliproteins. The chain is Chromophore lyase CpcT/CpeT 1 from Microcystis aeruginosa (strain NIES-843 / IAM M-2473).